Reading from the N-terminus, the 150-residue chain is Ribosomal RNA large subunit methyltransferase H (150 aa).

Residues leucine 68, glycine 97, and 116–121 (LSAMTL) each bind S-adenosyl-L-methionine.

This sequence belongs to the RNA methyltransferase RlmH family. As to quaternary structure, homodimer.

The protein localises to the cytoplasm. The catalysed reaction is pseudouridine(1915) in 23S rRNA + S-adenosyl-L-methionine = N(3)-methylpseudouridine(1915) in 23S rRNA + S-adenosyl-L-homocysteine + H(+). In terms of biological role, specifically methylates the pseudouridine at position 1915 (m3Psi1915) in 23S rRNA. The polypeptide is Ribosomal RNA large subunit methyltransferase H (Prochlorococcus marinus (strain MIT 9303)).